The sequence spans 481 residues: MQWEVVIGLEIHTQLSTQSKIFSGSATTFGSEPNTQASLVDLGMPGVLPVLNKEAVRMAVKFGLAVNAEIGQHNVFARKNYFYPDLPKGYQISQMELPIVGKGHLDIPLEDGTVKRIGITRAHLEEDAGKSLHEDFQGMTGIDLNRAGTPLLEIVSEPDMRNAKEAVAYVKAIHAIVRYLGICDGNMAEGSLRCDCNVSIRPKGQVEFGTRCEIKNVNSFRFIEKAINSEIQRQIDLIEDGGKVIQQTRLYDPNTNETRAMRSKEEANDYRYFPDPDLLPVIIEDSFLEETRATLPELPPQKRERFQSQFGLSTYDASVLASSREQADYFEQVVSISGDAKLAANWVMVELGSLLNKQGLEIDQSPVSAEQLGGMLKRITDNTISGKIAKMVFEAMANGEGSADEVIEKRGLKQVTDSGAIESMLDEVLAANAEQVEQYRAADEAKRGKMFGFFVGQAMKASKGKANPQQVNELLKAKLEG.

It belongs to the GatB/GatE family. GatB subfamily. In terms of assembly, heterotrimer of A, B and C subunits.

The catalysed reaction is L-glutamyl-tRNA(Gln) + L-glutamine + ATP + H2O = L-glutaminyl-tRNA(Gln) + L-glutamate + ADP + phosphate + H(+). It catalyses the reaction L-aspartyl-tRNA(Asn) + L-glutamine + ATP + H2O = L-asparaginyl-tRNA(Asn) + L-glutamate + ADP + phosphate + 2 H(+). In terms of biological role, allows the formation of correctly charged Asn-tRNA(Asn) or Gln-tRNA(Gln) through the transamidation of misacylated Asp-tRNA(Asn) or Glu-tRNA(Gln) in organisms which lack either or both of asparaginyl-tRNA or glutaminyl-tRNA synthetases. The reaction takes place in the presence of glutamine and ATP through an activated phospho-Asp-tRNA(Asn) or phospho-Glu-tRNA(Gln). The protein is Aspartyl/glutamyl-tRNA(Asn/Gln) amidotransferase subunit B of Pseudomonas syringae pv. syringae (strain B728a).